Here is a 152-residue protein sequence, read N- to C-terminus: uncharacterized protein (152 aa).

A disordered region spans residues Glu127 to Lys152. Residues Glu136–Lys152 show a composition bias toward basic residues.

Belongs to the mimivirus R546 family.

This is an uncharacterized protein from Sputnik virophage.